The chain runs to 484 residues: Glutamate--tRNA ligase (484 aa).

Residues 11–21 carry the 'HIGH' region motif; it reads PSPTGYPHLGN. Zn(2+)-binding residues include Cys108, Cys110, Cys135, and Asp137. The 'KMSKS' region motif lies at 245–249; it reads KLSKR. Lys248 contacts ATP.

The protein belongs to the class-I aminoacyl-tRNA synthetase family. Glutamate--tRNA ligase type 1 subfamily. Monomer. Zn(2+) serves as cofactor.

The protein resides in the cytoplasm. The enzyme catalyses tRNA(Glu) + L-glutamate + ATP = L-glutamyl-tRNA(Glu) + AMP + diphosphate. Functionally, catalyzes the attachment of glutamate to tRNA(Glu) in a two-step reaction: glutamate is first activated by ATP to form Glu-AMP and then transferred to the acceptor end of tRNA(Glu). This is Glutamate--tRNA ligase from Dehalococcoides mccartyi (strain ATCC BAA-2266 / KCTC 15142 / 195) (Dehalococcoides ethenogenes (strain 195)).